We begin with the raw amino-acid sequence, 505 residues long: MEGAGRDGNPLGGYRIGKTLGIGSFGKVKIAEHILTGHKVAIKILNRRKIKSMEMEEKVKREIKILRLFMHPHIIRLYEVIDTPADIYVVMEYVKSGELFDYIVEKGRLQEEEARRFFQQIISGVEYCHRNMVVHRDLKPENLLLDSKCNVKIADFGLSNVMRDGHFLKTSCGSPNYAAPEVISGKLYAGPEVDVWSCGVILYALLCGTLPFDDENIPNLFKKIKGGIYTLPSHLSPLARDLIPRMLVVDPMKRITIREIREHQWFTVGLPRYLAVPPPDTAQQVKKLDDETLNDVINMGFDKNQLIESLHKRLQNEATVAYYLLLDNRLRTTSGYLGAEFHESMESSLAQVTPAETPNSATDHRQHGHMESPGFGLRHHFAADRKWALGLQSRAHPREIITEVLKALQELNVCWKKIGHYNMKCRWSPSFPSHESMMHNNHGFGAESAIIETDDSEKSTHTVKFEIQLYKTRDEKYLLDLQRVSGPQLLFLDLCSAFLTQLRVL.

The Protein kinase domain maps to 14–266; that stretch reads YRIGKTLGIG…IREIREHQWF (253 aa). ATP is bound by residues 20 to 28 and K43; that span reads LGIGSFGKV. D137 serves as the catalytic Proton acceptor. The UBA domain maps to 287-327; the sequence is KLDDETLNDVINMGFDKNQLIESLHKRLQNEATVAYYLLLD. The segment covering 347 to 361 has biased composition (polar residues); it reads SSLAQVTPAETPNSA. Positions 347–372 are disordered; the sequence is SSLAQVTPAETPNSATDHRQHGHMES. A KA1 domain is found at 456 to 504; it reads SEKSTHTVKFEIQLYKTRDEKYLLDLQRVSGPQLLFLDLCSAFLTQLRV.

The protein belongs to the protein kinase superfamily. Ser/Thr protein kinase family. As to expression, expressed in young roots, young shoots, flowers, and immature seeds. Mostly expressed in leaf sheaths and roots, and to a lower extent, in germinating seeds, leaf blades and panicles.

It is found in the nucleus. The catalysed reaction is L-seryl-[protein] + ATP = O-phospho-L-seryl-[protein] + ADP + H(+). It catalyses the reaction L-threonyl-[protein] + ATP = O-phospho-L-threonyl-[protein] + ADP + H(+). In terms of biological role, serine/threonine-protein kinase involved in sugar signaling during germination and seedling growth. Negative regulators of sugar response complex (SRC) in alpha-amylase gene promoters, thus relieving SRC sugar repression in a MYBS1-dependent manner. Required for MYBS1 and AAMY3 accumulation under glucose starvation. The chain is Serine/threonine protein kinase OSK1 from Oryza sativa subsp. japonica (Rice).